Reading from the N-terminus, the 408-residue chain is MEKIMPISPISGHMPLSQIQVPQHATTSPLLEQGNRLFEQSVRRGPLHFQSSSLKHLCAELRQLQNAPSSMQARRVQDAIQHWENHHPKEVMARSTRLAELKQALAEQGTVGRTLQSKVMATGPQVILKQPMPALPQSIAAQITKAQTGCTTTLVSSATAELIKHNQNNQQHIKDSDGRKPVNNMPPPPPPPMADKTQKVKKWVVNTDSKQLQALRYYSAQGYNLINTYLRGGEYVKHQAIETLLSRNYLHSNEPTPQEFDAGMRAYIQDVTEGLNELAITDHKKVYRGLKFDKSELKNLLDQYTTEGNIIAEKGFLSTSPDKAWVNDTILVINLESGHKGRILGDAAHFKGEAEMLFPPESKMLVEKVLNRDDKEFDSHFSNLRLTDDASADTTRIKRIINIKMLNE.

The disordered stretch occupies residues 168 to 196 (NNQQHIKDSDGRKPVNNMPPPPPPPMADK). Pro residues predominate over residues 184–193 (NMPPPPPPPM). Positions 190 to 393 (PPPMADKTQK…LRLTDDASAD (204 aa)) constitute a TR mART core domain. Residues Arg-288, Ser-318, and Glu-355 contribute to the active site.

The protein in the C-terminal section; belongs to the SpvB family.

It catalyses the reaction L-arginyl-[protein] + NAD(+) = N(omega)-(ADP-D-ribosyl)-L-arginyl-[protein] + nicotinamide + H(+). In terms of biological role, mono-ADP-ribosylates chicken skeletal alpha-actin and human non-skeletal beta- and gamma-actin. Mono-ADP-ribosylates 'Arg-177' of yeast actin, blocking its ability to polymerize. Does not possess NAD(+)-glycohydrolase activity, unlike most mART enzymes. Upon expression in S.cerevisiae almost completely inhibits growth. The chain is Photox toxin (phxA) from Photorhabdus laumondii subsp. laumondii (strain DSM 15139 / CIP 105565 / TT01) (Photorhabdus luminescens subsp. laumondii).